We begin with the raw amino-acid sequence, 2152 residues long: Oxygen-regulated protein 1 (2152 aa).

Positions 1–19 are enriched in polar residues; that stretch reads MSDTPSTGFSIIHPTSSED. The disordered stretch occupies residues 1–25; it reads MSDTPSTGFSIIHPTSSEDQVPPPR. Doublecortin domains lie at 36-118 and 154-233; these read KRIS…VDLD and RSLV…GNYD. Disordered stretches follow at residues 353–375, 1435–1455, and 1587–1616; these read VSKT…RTES, DMEE…MTSS, and DWSD…ELAQ.

As to quaternary structure, interacts (via the doublecortin domains) with microtubules. Interacts with RP1L1. Interacts with MAK.

It is found in the cytoplasm. Its subcellular location is the cytoskeleton. The protein localises to the cilium axoneme. It localises to the cell projection. The protein resides in the cilium. It is found in the photoreceptor outer segment. Its function is as follows. Microtubule-associated protein regulating the stability and length of the microtubule-based axoneme of photoreceptors. Required for the differentiation of photoreceptor cells, it plays a role in the organization of the outer segment of rod and cone photoreceptors ensuring the correct orientation and higher-order stacking of outer segment disks along the photoreceptor axoneme. This is Oxygen-regulated protein 1 (RP1) from Papio hamadryas (Hamadryas baboon).